The chain runs to 172 residues: Photosystem I assembly protein Ycf3 (172 aa).

TPR repeat units follow at residues Ala-35–Pro-70, Ser-74–Leu-107, and Gly-122–Asn-155.

Belongs to the Ycf3 family.

It is found in the plastid. The protein localises to the chloroplast thylakoid membrane. Its function is as follows. Essential for the assembly of the photosystem I (PSI) complex. May act as a chaperone-like factor to guide the assembly of the PSI subunits. In Dioscorea elephantipes (Elephant's foot yam), this protein is Photosystem I assembly protein Ycf3.